The primary structure comprises 153 residues: Ribosome maturation factor RimP (153 aa).

It belongs to the RimP family.

Its subcellular location is the cytoplasm. In terms of biological role, required for maturation of 30S ribosomal subunits. This Burkholderia mallei (strain NCTC 10229) protein is Ribosome maturation factor RimP.